A 267-amino-acid chain; its full sequence is Dihydropteroate synthase (267 aa).

One can recognise a Pterin-binding domain in the interval 1–251 (MTKTKIMGIL…NVELNAKLAK (251 aa)). Residue N11 participates in Mg(2+) binding. (7,8-dihydropterin-6-yl)methyl diphosphate contacts are provided by residues T51, D84, N103, D167, K203, and 239-241 (RVH).

The protein belongs to the DHPS family. In terms of assembly, homodimer. Mg(2+) is required as a cofactor.

The enzyme catalyses (7,8-dihydropterin-6-yl)methyl diphosphate + 4-aminobenzoate = 7,8-dihydropteroate + diphosphate. It participates in cofactor biosynthesis; tetrahydrofolate biosynthesis; 7,8-dihydrofolate from 2-amino-4-hydroxy-6-hydroxymethyl-7,8-dihydropteridine diphosphate and 4-aminobenzoate: step 1/2. Its function is as follows. Catalyzes the condensation of para-aminobenzoate (pABA) with 6-hydroxymethyl-7,8-dihydropterin diphosphate (DHPt-PP) to form 7,8-dihydropteroate (H2Pte), the immediate precursor of folate derivatives. The protein is Dihydropteroate synthase (folP) of Staphylococcus aureus (strain MW2).